The following is a 107-amino-acid chain: Putative double-stranded DNA mimic protein HSM_1473 (107 aa).

The protein belongs to the putative dsDNA mimic protein family.

In terms of biological role, may act as a double-stranded DNA (dsDNA) mimic. Probably regulates the activity of a dsDNA-binding protein. The sequence is that of Putative double-stranded DNA mimic protein HSM_1473 from Histophilus somni (strain 2336) (Haemophilus somnus).